We begin with the raw amino-acid sequence, 461 residues long: MILCSYWHVGLVLLLFSCCGLVLGSEHETRLVANLLENYNKVIRPVEHHTHFVDITVGLQLIQLINVDEVNQIVETNVRLRQQWIDVRLRWNPADYGGIKKIRLPSDDVWLPDLVLYNNADGDFAIVHMTKLLLDYTGKIMWTPPAIFKSYCEIIVTHFPFDQQNCTMKLGIWTYDGTKVSISPESDRPDLSTFMESGEWVMKDYRGWKHWVYYTCCPDTPYLDITYHFIMQRIPLYFVVNVIIPCLLFSFLTVLVFYLPTDSGEKMTLSISVLLSLTVFLLVIVELIPSTSSAVPLIGKYMLFTMIFVISSIIVTVVVINTHHRSPSTHTMPQWVRKIFINTIPNVMFFSTMKRASKEKQENKIFADDIDISDISGKQVTGEVIFQTPLIKNPDVKSAIEGVKYIAEHMKSDEESSNAAEEWKYVAMVIDHILLCVFMLICIIGTVSVFAGRLIELSQEG.

The signal sequence occupies residues Met-1–Gly-24. The Extracellular segment spans residues Ser-25–Ile-234. Cystine bridges form between Cys-152/Cys-166 and Cys-216/Cys-217. A glycan (N-linked (GlcNAc...) asparagine) is linked at Asn-165. Transmembrane regions (helical) follow at residues Pro-235–Leu-259, Met-267–Val-285, and Tyr-301–Ile-320. At Asn-321–His-432 the chain is on the cytoplasmic side. Residues Ile-433–Ala-451 form a helical membrane-spanning segment.

The protein belongs to the ligand-gated ion channel (TC 1.A.9) family. Acetylcholine receptor (TC 1.A.9.1) subfamily. Alpha-1/CHRNA1 sub-subfamily. As to quaternary structure, pentamer of two alpha chains, and one each of the beta, delta, and gamma chains.

It is found in the postsynaptic cell membrane. The protein resides in the cell membrane. The catalysed reaction is K(+)(in) = K(+)(out). It carries out the reaction Na(+)(in) = Na(+)(out). In terms of biological role, upon acetylcholine binding, the AChR responds by an extensive change in conformation that affects all subunits and leads to opening of an ion-conducting channel across the plasma membrane. This is Acetylcholine receptor subunit alpha (CHRNA1) from Torpedo marmorata (Marbled electric ray).